Consider the following 84-residue polypeptide: Putative ribosomal RNA large subunit methyltransferase H 2 (84 aa).

Residues glycine 33 and 52-57 (FSKMTF) contribute to the S-adenosyl-L-methionine site.

Belongs to the RNA methyltransferase RlmH family. In terms of assembly, homodimer.

It localises to the cytoplasm. The catalysed reaction is pseudouridine(1915) in 23S rRNA + S-adenosyl-L-methionine = N(3)-methylpseudouridine(1915) in 23S rRNA + S-adenosyl-L-homocysteine + H(+). Specifically methylates the pseudouridine at position 1915 (m3Psi1915) in 23S rRNA. This Clostridium perfringens (strain SM101 / Type A) protein is Putative ribosomal RNA large subunit methyltransferase H 2 (rlmH2).